The primary structure comprises 181 residues: Adenine phosphoribosyltransferase (181 aa).

This sequence belongs to the purine/pyrimidine phosphoribosyltransferase family. As to quaternary structure, homodimer.

It localises to the cytoplasm. The enzyme catalyses AMP + diphosphate = 5-phospho-alpha-D-ribose 1-diphosphate + adenine. The protein operates within purine metabolism; AMP biosynthesis via salvage pathway; AMP from adenine: step 1/1. In terms of biological role, catalyzes a salvage reaction resulting in the formation of AMP, that is energically less costly than de novo synthesis. The polypeptide is Adenine phosphoribosyltransferase (Shewanella woodyi (strain ATCC 51908 / MS32)).